Here is a 135-residue protein sequence, read N- to C-terminus: Congerin-1 (135 aa).

Position 1 is an N-acetylserine (serine 1). Residues 3–135 (GLQVKNFDFT…GDARLTLVKE (133 aa)) enclose the Galectin domain. 70–76 (WETEQRS) serves as a coordination point for a beta-D-galactoside.

In terms of assembly, homodimer.

This protein binds beta-galactoside. Its physiological function is not yet known. In Conger myriaster (Conger eel), this protein is Congerin-1.